A 348-amino-acid chain; its full sequence is NADH-ubiquinone oxidoreductase chain 2 (348 aa).

9 consecutive transmembrane segments (helical) span residues 13–33, 60–80, 93–113, 149–169, 178–197, 202–219, 246–266, 274–294, and 326–346; these read VGLGTTLTFASSHWLLAWMGL, FLTQATAAAMILFASTTNAWM, IASTMFMAALALKIGLAPMHF, IDPLLLTLLGISSTLVGGWGG, ILAYSSIAHMGWMIIVIQYA, LIALGTYIIMTSAAFLTL, LVLLSLGGLPPLTGFMPKWLI, DLPIIATAMALTALISLYFYL, and LALFTTAALGLLPMAPAILML.

This sequence belongs to the complex I subunit 2 family.

It localises to the mitochondrion inner membrane. It catalyses the reaction a ubiquinone + NADH + 5 H(+)(in) = a ubiquinol + NAD(+) + 4 H(+)(out). Functionally, core subunit of the mitochondrial membrane respiratory chain NADH dehydrogenase (Complex I) that is believed to belong to the minimal assembly required for catalysis. Complex I functions in the transfer of electrons from NADH to the respiratory chain. The immediate electron acceptor for the enzyme is believed to be ubiquinone. In Cyprinus carpio (Common carp), this protein is NADH-ubiquinone oxidoreductase chain 2 (MT-ND2).